The following is a 357-amino-acid chain: Actin, macronuclear (357 aa).

Belongs to the actin family. In terms of processing, met-1 may be removed after translation.

Its subcellular location is the cytoplasm. The protein resides in the cytoskeleton. It carries out the reaction ATP + H2O = ADP + phosphate + H(+). Actins are highly conserved proteins that are involved in various types of cell motility and are ubiquitously expressed in all eukaryotic cells. This chain is Actin, macronuclear, found in Oxytricha fallax.